The primary structure comprises 311 residues: Pantothenate synthetase (311 aa).

43-50 (MGALHEGH) contacts ATP. Histidine 50 (proton donor) is an active-site residue. Glutamine 75 is a (R)-pantoate binding site. Residue glutamine 75 coordinates beta-alanine. Residue 161-164 (GEKD) coordinates ATP. Position 167 (glutamine 167) interacts with (R)-pantoate. Residues valine 190 and 198 to 201 (MSSR) each bind ATP.

Belongs to the pantothenate synthetase family. In terms of assembly, homodimer.

Its subcellular location is the cytoplasm. The enzyme catalyses (R)-pantoate + beta-alanine + ATP = (R)-pantothenate + AMP + diphosphate + H(+). It functions in the pathway cofactor biosynthesis; (R)-pantothenate biosynthesis; (R)-pantothenate from (R)-pantoate and beta-alanine: step 1/1. Catalyzes the condensation of pantoate with beta-alanine in an ATP-dependent reaction via a pantoyl-adenylate intermediate. The sequence is that of Pantothenate synthetase from Mycolicibacterium vanbaalenii (strain DSM 7251 / JCM 13017 / BCRC 16820 / KCTC 9966 / NRRL B-24157 / PYR-1) (Mycobacterium vanbaalenii).